The chain runs to 130 residues: Large ribosomal subunit protein bL20 (130 aa).

It belongs to the bacterial ribosomal protein bL20 family.

In terms of biological role, binds directly to 23S ribosomal RNA and is necessary for the in vitro assembly process of the 50S ribosomal subunit. It is not involved in the protein synthesizing functions of that subunit. This chain is Large ribosomal subunit protein bL20, found in Leifsonia xyli subsp. xyli (strain CTCB07).